The chain runs to 448 residues: Solute carrier family 52, riboflavin transporter, member 3-A (448 aa).

3 consecutive transmembrane segments (helical) span residues 11–31 (AFGL…PLIV), 40–60 (LPSY…LVTL), and 73–93 (LAIY…AVFW). The N-linked (GlcNAc...) asparagine glycan is linked to asparagine 94. 2 consecutive transmembrane segments (helical) span residues 107–127 (AFFI…VTFL) and 138–158 (ITTY…VALA). Asparagine 168, asparagine 171, asparagine 175, and asparagine 194 each carry an N-linked (GlcNAc...) asparagine glycan. 6 helical membrane passes run 198–218 (EIFF…FLIL), 280–300 (AFIY…LPSV), 315–335 (LSAA…MFFP), 339–359 (LVFL…NMAM), 376–396 (AIIV…KVMV), and 407–427 (ALVW…IIMF).

Belongs to the riboflavin transporter family.

Its subcellular location is the cell membrane. It carries out the reaction riboflavin(in) = riboflavin(out). Functionally, plasma membrane transporter mediating the uptake by cells of the water soluble vitamin B2/riboflavin that plays a key role in biochemical oxidation-reduction reactions of the carbohydrate, lipid, and amino acid metabolism. This Danio rerio (Zebrafish) protein is Solute carrier family 52, riboflavin transporter, member 3-A (slc52a3a).